Consider the following 458-residue polypeptide: Flavonol 3-O-glucosyltransferase UGT76E12 (458 aa).

His25 (proton acceptor) is an active-site residue. His25 lines the an anthocyanidin pocket. Asp118 (charge relay) is an active-site residue. UDP-alpha-D-glucose contacts are provided by Thr140, Ala339, Gln341, His356, Trp359, Asn360, Ser361, and Glu364. Gly379 contributes to the an anthocyanidin binding site. Asp380 and Gln381 together coordinate UDP-alpha-D-glucose.

It belongs to the UDP-glycosyltransferase family.

The catalysed reaction is a flavonol + UDP-alpha-D-glucose = a flavonol 3-O-beta-D-glucoside + UDP + H(+). It carries out the reaction a 7-O-hydroxy-flavonol + UDP-alpha-D-glucose = a flavonol 7-O-beta-D-glucoside + UDP + H(+). Possesses quercetin 3-O-glucosyltransferase and 7-O-glucosyltransferase activities in vitro. The sequence is that of Flavonol 3-O-glucosyltransferase UGT76E12 from Arabidopsis thaliana (Mouse-ear cress).